Consider the following 662-residue polypeptide: UvrABC system protein B (662 aa).

Positions 31–188 (DNIEGGEKAQ…NDLVDIQFER (158 aa)) constitute a Helicase ATP-binding domain. Residue 44–51 (GATGTGKT) participates in ATP binding. Residues 97–120 (YYDYYQPEAYVPSSDTYIEKDSSV) carry the Beta-hairpin motif. The 167-residue stretch at 435–601 (QIDDLLGEIN…TIKKEIRDLI (167 aa)) folds into the Helicase C-terminal domain. The 36-residue stretch at 626-661 (KELVKKLEKQMQEAVEVLDFELAAQIRDMMLEVKAL) folds into the UVR domain.

It belongs to the UvrB family. In terms of assembly, forms a heterotetramer with UvrA during the search for lesions. Interacts with UvrC in an incision complex.

The protein localises to the cytoplasm. Functionally, the UvrABC repair system catalyzes the recognition and processing of DNA lesions. A damage recognition complex composed of 2 UvrA and 2 UvrB subunits scans DNA for abnormalities. Upon binding of the UvrA(2)B(2) complex to a putative damaged site, the DNA wraps around one UvrB monomer. DNA wrap is dependent on ATP binding by UvrB and probably causes local melting of the DNA helix, facilitating insertion of UvrB beta-hairpin between the DNA strands. Then UvrB probes one DNA strand for the presence of a lesion. If a lesion is found the UvrA subunits dissociate and the UvrB-DNA preincision complex is formed. This complex is subsequently bound by UvrC and the second UvrB is released. If no lesion is found, the DNA wraps around the other UvrB subunit that will check the other stand for damage. The polypeptide is UvrABC system protein B (Streptococcus pneumoniae serotype 19F (strain G54)).